The chain runs to 470 residues: Acyltransferase BOA11 (470 aa).

The Proton acceptor role is filled by H156.

Belongs to the plant acyltransferase family.

Its pathway is polyketide biosynthesis. Its function is as follows. Acyltransferase; part of the gene cluster B that mediates the biosynthesis of botcinic acid and its botcinin derivatives, acetate-derived polyketides that contribute to virulence when combined with the sesquiterpene botrydial. Botcinic acid and its derivatives have been shown to induce chlorosis and necrosis during host plant infection, but also have antifungal activities. Two polyketide synthases, BOA6 and BOA9, are involved in the biosynthesis of botcinins. BOA6 mediates the formation of the per-methylated tetraketide core by condensation of four units of malonyl-CoA with one unit of acetyl-CoA, which would be methylated in activated methylene groups to yield a bicyclic acid intermediate that could then either be converted to botrylactone derivatives or lose the starter acetate unit through a retro-Claisen type C-C bond cleavage to yield botcinin derivatives. The second polyketide synthase, BOA9, is probably required for the biosynthesis of the tetraketide side chain of botcinins. The methyltransferase (MT) domain within BOA6 is probably responsible for the incorporation of four methyl groups. The trans-enoyl reductase BOA5 might take over the enoyl reductase function of BOA6 that misses an ER domain. The monooxygenases BOA2, BOA3 and BOA4 might be involved in further hydroxylations at C4, C5 and C8, whereas BOA7, close to BOA9, could potentially be involved in the hydroxylation at C4 in the side chain of botcinins. This Botryotinia fuckeliana (strain B05.10) (Noble rot fungus) protein is Acyltransferase BOA11.